Here is a 240-residue protein sequence, read N- to C-terminus: Large ribosomal subunit protein uL1 (240 aa).

This sequence belongs to the universal ribosomal protein uL1 family. As to quaternary structure, part of the 50S ribosomal subunit.

Functionally, binds directly to 23S rRNA. The L1 stalk is quite mobile in the ribosome, and is involved in E site tRNA release. Its function is as follows. Protein L1 is also a translational repressor protein, it controls the translation of the L11 operon by binding to its mRNA. The sequence is that of Large ribosomal subunit protein uL1 from Nocardioides sp. (strain ATCC BAA-499 / JS614).